The chain runs to 115 residues: Phosphorelay protein LuxU (115 aa).

Positions 17-107 (GADNVPVLLE…DRLHQTQQAY (91 aa)) constitute an HPt domain. His-56 carries the phosphohistidine modification.

In terms of assembly, monomer.

Functionally, phosphorelay protein which receives a sensory signal from a sensor kinase and transmit it to LuxO. At low cell density, a phosphoryl group is transferred from the sensor kinase, probably on His-56 and this phosphoryl group is further transferred to LuxO. The protein is Phosphorelay protein LuxU (luxU) of Vibrio vulnificus (strain CMCP6).